The chain runs to 199 residues: Guanylyl cyclase-activating protein 1 (199 aa).

Gly-2 carries the N-myristoyl glycine lipid modification. Deamidated asparagine is present on Asn-3. EF-hand domains are found at residues 13-48 (SATECHQWYKKFMTECPSGQLTLYEFKQFFGLKNLS), 50-85 (SANKYVEQMFETFDFNKDGYIDFMEYVAALSLVLKG), 86-121 (KVDQKLRWYFKLYDVDGNGCIDRGELLNIIKAIRAI), and 129-164 (TAEEFTNMVFDKIDINGDGELSLEEFMEGVQKDEVL). Asp-63, Asn-65, Asp-67, Tyr-69, Glu-74, Asp-99, Asp-101, Asn-103, Cys-105, Glu-110, Asp-142, Asn-144, Asp-146, Glu-148, and Glu-153 together coordinate Ca(2+).

Retina, in rod and cone outer segments, and pineal gland.

Stimulates retinal guanylyl cyclase when free calcium ions concentration is low and inhibits guanylyl cyclase when free calcium ions concentration is elevated. This Ca(2+)-sensitive regulation of retinal guanylyl cyclase is a key event in recovery of the dark state of rod photoreceptors following light exposure. The chain is Guanylyl cyclase-activating protein 1 (GUCA1A) from Gallus gallus (Chicken).